The primary structure comprises 185 residues: Elongation factor P (185 aa).

The protein belongs to the elongation factor P family.

It localises to the cytoplasm. The protein operates within protein biosynthesis; polypeptide chain elongation. Involved in peptide bond synthesis. Stimulates efficient translation and peptide-bond synthesis on native or reconstituted 70S ribosomes in vitro. Probably functions indirectly by altering the affinity of the ribosome for aminoacyl-tRNA, thus increasing their reactivity as acceptors for peptidyl transferase. The chain is Elongation factor P from Deinococcus radiodurans (strain ATCC 13939 / DSM 20539 / JCM 16871 / CCUG 27074 / LMG 4051 / NBRC 15346 / NCIMB 9279 / VKM B-1422 / R1).